The following is a 468-amino-acid chain: Ubiquitin carboxyl-terminal hydrolase 17-like protein B (468 aa).

Residues Met1–Pro20 form a disordered region. Residues Cys51 to Gln348 enclose the USP domain. The active-site Nucleophile is Cys60. His307 functions as the Proton acceptor in the catalytic mechanism. Residues Lys374–Gly449 form a disordered region. A compositionally biased stretch (basic and acidic residues) spans Cys394–Lys403. Polar residues predominate over residues Gly422 to Glu434.

The protein belongs to the peptidase C19 family. USP17 subfamily. In terms of processing, ubiquitinated. As to expression, detected in brain, heart, liver, lung, kidney, ovary and spleen.

It carries out the reaction Thiol-dependent hydrolysis of ester, thioester, amide, peptide and isopeptide bonds formed by the C-terminal Gly of ubiquitin (a 76-residue protein attached to proteins as an intracellular targeting signal).. Its activity is regulated as follows. Inhibited by ubiquitin aldehyde. In terms of biological role, deubiquitinating enzyme that removes conjugated ubiquitin from specific proteins to regulate different cellular processes. The sequence is that of Ubiquitin carboxyl-terminal hydrolase 17-like protein B from Mus musculus (Mouse).